Here is a 409-residue protein sequence, read N- to C-terminus: Glycosyltransferase GtfC (409 aa).

The protein belongs to the glycosyltransferase 28 family.

The enzyme catalyses dTDP-beta-L-vancosamine + devancoaminyl-vancomycin = epivancomycin + dTDP + H(+). It catalyses the reaction chloroorienticin B + dTDP-beta-L-vancosamine = chloroeremomycin + dTDP + H(+). It participates in antibiotic biosynthesis; vancomycin biosynthesis. Catalyzes the attachment of dTDP-L-4-epi-vancosamine to chloroorienticin B to form chloroeremomycin in the biosynthesis of glycopeptide antibiotic chloroeremomycin, a member of the vancomycin group of antibiotics. Also able to use dTDP-L-4-epi-vancosamine and devancoaminyl-vancomycin (DVV) to create epivancomycin. Acts downstream of GtfA. The protein is Glycosyltransferase GtfC (gtfC) of Amycolatopsis orientalis (Nocardia orientalis).